We begin with the raw amino-acid sequence, 1220 residues long: DNA-directed RNA polymerase subunit beta' (1220 aa).

Zn(2+) is bound by residues Cys61, Cys63, Cys76, and Cys79. Positions 450, 452, and 454 each coordinate Mg(2+). The segment at 1197 to 1220 (QPESESEEASDIPKLDDVAKTFDN) is disordered. Residues 1207 to 1220 (DIPKLDDVAKTFDN) are compositionally biased toward basic and acidic residues.

This sequence belongs to the RNA polymerase beta' chain family. The RNAP catalytic core consists of 2 alpha, 1 beta, 1 beta' and 1 omega subunit. When a sigma factor is associated with the core the holoenzyme is formed, which can initiate transcription. It depends on Mg(2+) as a cofactor. The cofactor is Zn(2+).

The catalysed reaction is RNA(n) + a ribonucleoside 5'-triphosphate = RNA(n+1) + diphosphate. In terms of biological role, DNA-dependent RNA polymerase catalyzes the transcription of DNA into RNA using the four ribonucleoside triphosphates as substrates. This Leuconostoc mesenteroides subsp. mesenteroides (strain ATCC 8293 / DSM 20343 / BCRC 11652 / CCM 1803 / JCM 6124 / NCDO 523 / NBRC 100496 / NCIMB 8023 / NCTC 12954 / NRRL B-1118 / 37Y) protein is DNA-directed RNA polymerase subunit beta'.